A 163-amino-acid polypeptide reads, in one-letter code: Nucleotide-binding protein DET1318 (163 aa).

It belongs to the YajQ family.

Nucleotide-binding protein. In Dehalococcoides mccartyi (strain ATCC BAA-2266 / KCTC 15142 / 195) (Dehalococcoides ethenogenes (strain 195)), this protein is Nucleotide-binding protein DET1318.